The chain runs to 519 residues: ATP synthase subunit alpha (519 aa).

175–182 (GDRQTGKT) is a binding site for ATP.

Belongs to the ATPase alpha/beta chains family. F-type ATPases have 2 components, CF(1) - the catalytic core - and CF(0) - the membrane proton channel. CF(1) has five subunits: alpha(3), beta(3), gamma(1), delta(1), epsilon(1). CF(0) has three main subunits: a(1), b(2) and c(9-12). The alpha and beta chains form an alternating ring which encloses part of the gamma chain. CF(1) is attached to CF(0) by a central stalk formed by the gamma and epsilon chains, while a peripheral stalk is formed by the delta and b chains.

It localises to the cell inner membrane. It carries out the reaction ATP + H2O + 4 H(+)(in) = ADP + phosphate + 5 H(+)(out). Functionally, produces ATP from ADP in the presence of a proton gradient across the membrane. The alpha chain is a regulatory subunit. The polypeptide is ATP synthase subunit alpha (Acinetobacter baylyi (strain ATCC 33305 / BD413 / ADP1)).